The following is a 469-amino-acid chain: ATP synthase subunit beta (469 aa).

Glycine 155–threonine 162 lines the ATP pocket.

It belongs to the ATPase alpha/beta chains family. F-type ATPases have 2 components, CF(1) - the catalytic core - and CF(0) - the membrane proton channel. CF(1) has five subunits: alpha(3), beta(3), gamma(1), delta(1), epsilon(1). CF(0) has three main subunits: a(1), b(2) and c(9-12). The alpha and beta chains form an alternating ring which encloses part of the gamma chain. CF(1) is attached to CF(0) by a central stalk formed by the gamma and epsilon chains, while a peripheral stalk is formed by the delta and b chains.

Its subcellular location is the cell inner membrane. The enzyme catalyses ATP + H2O + 4 H(+)(in) = ADP + phosphate + 5 H(+)(out). In terms of biological role, produces ATP from ADP in the presence of a proton gradient across the membrane. The catalytic sites are hosted primarily by the beta subunits. This Syntrophobacter fumaroxidans (strain DSM 10017 / MPOB) protein is ATP synthase subunit beta.